The following is a 470-amino-acid chain: Nuclear segregation protein BFR1 (470 aa).

2 coiled-coil regions span residues 17–178 and 237–281; these read DKKL…NGLN and NEFK…THAK. Phosphoserine is present on serine 260. Threonine 336 is modified (phosphothreonine). Positions 346–368 are disordered; the sequence is APSKSKKYKKKNQQKNTENEQPA. Residues 349 to 358 are compositionally biased toward basic residues; it reads KSKKYKKKNQ. A Phosphoserine modification is found at serine 369. The stretch at 398 to 469 forms a coiled coil; it reads NSDDVKITVE…EQEESEKDKE (72 aa). A disordered region spans residues 447–470; that stretch reads QQVKKELEEKRLKEQEESEKDKEN.

Functionally, implicated in secretion, nuclear segregation and in maintenance of cell size. This Saccharomyces cerevisiae (strain ATCC 204508 / S288c) (Baker's yeast) protein is Nuclear segregation protein BFR1 (BFR1).